Reading from the N-terminus, the 136-residue chain is Histone H3.2 (136 aa).

The interval 1 to 43 (MARTKQTARKSTGGKAPRKQLATKAARKSAPATGGVKKPHRFR) is disordered. Lys5 bears the N6-methylated lysine mark. Lys10 carries the N6-acetyllysine; alternate modification. Lys10 is subject to N6-methylated lysine; alternate. The residue at position 11 (Ser11) is a Phosphoserine. Thr12 is subject to Phosphothreonine. Position 15 is an N6-acetyllysine (Lys15). N6-acetyllysine; alternate is present on residues Lys19 and Lys24. N6-methylated lysine; alternate occurs at positions 19 and 24. Lys28 bears the N6-methylated lysine mark. At Ser29 the chain carries Phosphoserine. At Lys37 the chain carries N6-methylated lysine.

Belongs to the histone H3 family. In terms of assembly, the nucleosome is a histone octamer containing two molecules each of H2A, H2B, H3 and H4 assembled in one H3-H4 heterotetramer and two H2A-H2B heterodimers. The octamer wraps approximately 147 bp of DNA. Acetylation is generally linked to gene activation. Can be acetylated to form H3K9ac, H3K14ac, H3K18ac and H3K23ac. H3K9ac could compete with H3K9me and prevent gene silencing. H3K9ac is restricted to euchromatin. In terms of processing, methylated to form mainly H3K4me, H3K9me, H3K18me, H3K23me, H3K27me and H3K36me. H3K4me1/2/3, H3K9me3, H3K27me3 and H3K36me1/2/3 are typical marks for euchromatin, whereas heterochromatic chromocenters are enriched in H3K9me1/2 and H3K27me1/2. H2BK143ub1 is probably prerequisite for H3K4me. Post-translationally, can be phosphorylated to form H3S10ph, H3T11ph and H3S28ph.

Its subcellular location is the nucleus. It is found in the chromosome. In terms of biological role, core component of nucleosome. Nucleosomes wrap and compact DNA into chromatin, limiting DNA accessibility to the cellular machineries which require DNA as a template. Histones thereby play a central role in transcription regulation, DNA repair, DNA replication and chromosomal stability. DNA accessibility is regulated via a complex set of post-translational modifications of histones, also called histone code, and nucleosome remodeling. The sequence is that of Histone H3.2 from Encephalartos altensteinii (Altenstein's bread tree).